We begin with the raw amino-acid sequence, 463 residues long: NF-kappa-B-activating protein (463 aa).

Basic residues predominate over residues 1-14; that stretch reads MRSRSRSRSRQRER. Residues 1–358 form a disordered region; sequence MRSRSRSRSR…GGSLNQKDFG (358 aa). Composition is skewed to basic and acidic residues over residues 15-29 and 39-71; these read RRSDSRARSRSERRT and VSRERKRERDRELHRERTSNRSSRRSREKDAVP. Positions 78–98 are enriched in low complexity; it reads SSPSRSSSSSSSDRSSSSRSP. The span at 107 to 125 shows a compositional bias: basic and acidic residues; sequence KSVERWPNDRYHENNDRRQ. Residues Ser136, Ser189, and Ser191 each carry the phosphoserine modification. At Thr195 the chain carries Phosphothreonine. A compositionally biased stretch (basic residues) spans 208 to 238; that stretch reads PKKKKKKGKRKHKKSEKKSKKKSKKSKKKKS. The span at 241–267 shows a compositional bias: low complexity; that stretch reads ESSSSSSSSSSEDSSDESSSSSSSSSS. Over residues 268-278 the composition is skewed to acidic residues; it reads DSEDESEEEDV. The segment covering 279–288 has biased composition (basic and acidic residues); that stretch reads WLEKTADGIK. A compositionally biased stretch (basic residues) spans 289 to 312; sequence KPKKKKSSTSKKDKKSKKKKKKRK. Residues 330–340 are compositionally biased toward basic and acidic residues; sequence KNKESASHNDE.

The protein belongs to the NKAP family.

It is found in the nucleus. Tumor suppressor involved in maintaining genome integrity. Influences gene expression and mRNA splicing. The protein is NF-kappa-B-activating protein of Drosophila melanogaster (Fruit fly).